Consider the following 459-residue polypeptide: Cysteine--tRNA ligase (459 aa).

Zn(2+) is bound at residue cysteine 31. Positions 33–43 (PTVYYNPHIGN) match the 'HIGH' region motif. Residues cysteine 216, histidine 241, and glutamate 245 each contribute to the Zn(2+) site. Positions 274–278 (KMSKS) match the 'KMSKS' region motif. Lysine 277 contacts ATP.

This sequence belongs to the class-I aminoacyl-tRNA synthetase family. As to quaternary structure, monomer. Requires Zn(2+) as cofactor.

It localises to the cytoplasm. It carries out the reaction tRNA(Cys) + L-cysteine + ATP = L-cysteinyl-tRNA(Cys) + AMP + diphosphate. This Rickettsia conorii (strain ATCC VR-613 / Malish 7) protein is Cysteine--tRNA ligase.